An 811-amino-acid chain; its full sequence is Metal transporter cnnm-1 (811 aa).

Positions 1-24 are cleaved as a signal peptide; it reads MSASCLRLLTLSLFILGQCNVTAA. 4 N-linked (GlcNAc...) asparagine glycosylation sites follow: Asn-20, Asn-49, Asn-61, and Asn-122. Residues 25–204 lie on the Extracellular side of the membrane; it reads QNGVDDEVTT…KEYFLPLPLQ (180 aa). Residues 197–376 enclose the CNNM transmembrane domain; the sequence is YFLPLPLQIA…TDNGQVSNEL (180 aa). The helical transmembrane segment at 205-225 threads the bilayer; that stretch reads IACIGFLLCLSALFSGLTLGL. Over 226–259 the chain is Cytoplasmic; the sequence is MSLTPQELELVIKSGAIKEQKCAAKILPVRKKGN. A helical transmembrane segment spans residues 260–280; it reads LLLCSLLLGNVIVNSAISILM. Over 281–284 the chain is Extracellular; the sequence is GELT. Residues 285 to 305 form a helical membrane-spanning segment; that stretch reads TGIYALIGSTMGIVIFGEILP. The Cytoplasmic segment spans residues 306–315; the sequence is QSICVKKGLE. Residues 316 to 336 form a helical membrane-spanning segment; sequence VGAHTISITQLFIFLTFPIAW. The Extracellular segment spans residues 337–811; sequence PVSKLLDCLL…EEEMALLDQP (475 aa). 2 consecutive CBS domains span residues 394–456 and 462–530; these read MTKI…NFTV and YHKH…INDE. N-linked (GlcNAc...) asparagine glycans are attached at residues Asn-435 and Asn-453. The segment at 741 to 760 is disordered; the sequence is DVSHNSSAHNSNLSLVEKPG. The segment covering 743–755 has biased composition (low complexity); the sequence is SHNSSAHNSNLSL. N-linked (GlcNAc...) asparagine glycosylation is found at Asn-745 and Asn-752.

It belongs to the ACDP family. As to expression, highly expressed in the intestine and in neurons, but it is also expressed in a variety of tissues including the pharynx, hypodermis, rectum and in muscles.

The protein localises to the basolateral cell membrane. Probable metal transporter. Probably acts redundantly with the other metal transport proteins cnnm-2, cnnm-3, cnnm-4 and cnnm-5 to regulate Mg(2+) homeostasis. Promotes postembryonic gonad development by regulating Mg(2+) levels, probably via AMPK signaling. This chain is Metal transporter cnnm-1, found in Caenorhabditis elegans.